Reading from the N-terminus, the 439-residue chain is Beta-1,3-galactosyl-O-glycosyl-glycoprotein beta-1,6-N-acetylglucosaminyltransferase (439 aa).

At 1-11 (MVGWKKKKLCR) the chain is on the cytoplasmic side. A helical; Signal-anchor for type II membrane protein transmembrane segment spans residues 12-29 (GHHLWVLGCYMLLAVVSL). Residues 30 to 439 (RLSLRFKCDV…RHKAIYGTEL (410 aa)) lie on the Lumenal side of the membrane. 2 N-linked (GlcNAc...) asparagine; by host glycosylation sites follow: Asn-71 and Asn-107. Disulfide bonds link Cys-72–Cys-229, Cys-163–Cys-383, Cys-184–Cys-211, and Cys-392–Cys-424.

The protein belongs to the glycosyltransferase 14 family.

The protein resides in the host Golgi apparatus membrane. It carries out the reaction a 3-O-[beta-D-galactosyl-(1-&gt;3)-N-acetyl-alpha-D-galactosaminyl]-L-seryl-[protein] + UDP-N-acetyl-alpha-D-glucosamine = 3-O-{beta-D-galactosyl-(1-&gt;3)-[N-acetyl-beta-D-glucosaminyl-(1-&gt;6)]-N-acetyl-alpha-D-galactosaminyl}-L-seryl-[protein] + UDP + H(+). It catalyses the reaction a 3-O-[beta-D-galactosyl-(1-&gt;3)-N-acetyl-alpha-D-galactosaminyl]-L-threonyl-[protein] + UDP-N-acetyl-alpha-D-glucosamine = a 3-O-{beta-D-galactosyl-(1-&gt;3)-[N-acetyl-beta-D-glucosaminyl-(1-&gt;6)]-N-acetyl-alpha-D-galactosaminyl}-L-threonyl-[protein] + UDP + H(+). The catalysed reaction is a beta-D-Gal-(1-&gt;4)-beta-D-GlcNAc-(1-&gt;3)-beta-D-Gal-(1-&gt;4)-beta-D-GlcNAc derivative + UDP-N-acetyl-alpha-D-glucosamine = a beta-D-Gal-(1-&gt;4)-beta-D-GlcNAc-(1-&gt;3)-[beta-D-GlcNAc-(1-&gt;6)]-beta-D-Gal-(1-&gt;4)-N-acetyl-beta-D-glucosaminyl derivative + UDP + H(+). The enzyme catalyses 3-O-[N-acetyl-beta-D-glucosaminyl-(1-&gt;3)-N-acetyl-alpha-D-galactosaminyl]-L-seryl-[protein] + UDP-N-acetyl-alpha-D-glucosamine = 3-O-[N-acetyl-beta-D-glucosaminyl-(1-&gt;3)-[N-acetyl-beta-D-glucosaminyl-(1-&gt;6)]-N-acetyl-alpha-D-galactosaminyl]-L-seryl-[protein] + UDP + H(+). It carries out the reaction a 3-O-[N-acetyl-beta-D-glucosaminyl-(1-&gt;3)-N-acetyl-alpha-D-galactosaminyl]-L-threonyl-[protein] + UDP-N-acetyl-alpha-D-glucosamine = 3-O-[N-acetyl-beta-D-glucosaminyl-(1-&gt;3)-[N-acetyl-beta-D-glucosaminyl-(1-&gt;6)]-N-acetyl-alpha-D-galactosaminyl]-L-threonyl-[protein] + UDP + H(+). It participates in protein modification; protein glycosylation. Its function is as follows. Non-essential glycosyltransferase that can synthesize all known mucin beta 6 N-acetylglucosaminides. Mediates core 2 and core 4 O-glycan branching, 2 important steps in mucin-type biosynthesis. Has also I-branching enzyme activity by converting linear into branched poly-N-acetyllactosaminoglycans. Contributes to the post-translational modifications of structural proteins. This chain is Beta-1,3-galactosyl-O-glycosyl-glycoprotein beta-1,6-N-acetylglucosaminyltransferase (Bo17), found in Bovine herpesvirus 4 (BoHV-4).